The primary structure comprises 94 residues: uncharacterized protein (94 aa).

Positions Met1–Ala22 are cleaved as a signal peptide.

This is an uncharacterized protein from Escherichia coli (strain K12).